A 1150-amino-acid chain; its full sequence is PAN2-PAN3 deadenylation complex catalytic subunit pan2 (1150 aa).

WD repeat units lie at residues 96–139 and 270–309; these read AHEE…DKLH and ANVS…HFNE. The interval 310 to 446 is linker; that stretch reads MSKEAEFGDV…GAKINGETDD (137 aa). The USP domain occupies 447–816; sequence DPLLKYSNVE…IPCVLAYQVQ (370 aa). The region spanning 865–1043 is the Exonuclease domain; sequence VALDTEFVDL…IEDARMALRL (179 aa). The a divalent metal cation site is built by Asp868, Glu870, Asp977, and Asp1036. The segment at 1074–1150 is disordered; the sequence is PPPRNGVPTV…GDFFSGSPLK (77 aa). Over residues 1091–1106 the composition is skewed to polar residues; sequence VTMQNNSGRNTPSTSD. Low complexity predominate over residues 1108–1120; it reads AGAAASAPATPRQ.

This sequence belongs to the peptidase C19 family. PAN2 subfamily. Forms a heterotrimer with an asymmetric homodimer of the regulatory subunit pan3 to form the poly(A)-nuclease (PAN) deadenylation complex. A divalent metal cation is required as a cofactor.

The protein localises to the cytoplasm. It carries out the reaction Exonucleolytic cleavage of poly(A) to 5'-AMP.. Positively regulated by the regulatory subunit pan3. Its function is as follows. Catalytic subunit of the poly(A)-nuclease (PAN) deadenylation complex, one of two cytoplasmic mRNA deadenylases involved in mRNA turnover. PAN specifically shortens poly(A) tails of RNA and the activity is stimulated by poly(A)-binding protein pab1. PAN deadenylation is followed by rapid degradation of the shortened mRNA tails by the CCR4-NOT complex. Deadenylated mRNAs are then degraded by two alternative mechanisms, namely exosome-mediated 3'-5' exonucleolytic degradation, or deadenylation-dependent mRNA decaping and subsequent 5'-3' exonucleolytic degradation by xrn1. May also be involved in post-transcriptional maturation of mRNA poly(A) tails. The protein is PAN2-PAN3 deadenylation complex catalytic subunit pan2 of Aspergillus niger (strain ATCC MYA-4892 / CBS 513.88 / FGSC A1513).